Here is a 114-residue protein sequence, read N- to C-terminus: Hemerythrin subunit 2 (114 aa).

Fe cation contacts are provided by His-26, His-55, Glu-59, His-74, His-78, His-102, and Asp-107.

Belongs to the hemerythrin family.

Its function is as follows. Hemerythrin is a respiratory protein in blood cells of certain marine worms. The oxygen-binding site in each chain contains two iron atoms. The protein is Hemerythrin subunit 2 of Golfingia vulgaris (Marine worm).